The chain runs to 315 residues: Methionyl-tRNA formyltransferase (315 aa).

111–114 serves as a coordination point for (6S)-5,6,7,8-tetrahydrofolate; sequence SLLP.

The protein belongs to the Fmt family.

It catalyses the reaction L-methionyl-tRNA(fMet) + (6R)-10-formyltetrahydrofolate = N-formyl-L-methionyl-tRNA(fMet) + (6S)-5,6,7,8-tetrahydrofolate + H(+). In terms of biological role, attaches a formyl group to the free amino group of methionyl-tRNA(fMet). The formyl group appears to play a dual role in the initiator identity of N-formylmethionyl-tRNA by promoting its recognition by IF2 and preventing the misappropriation of this tRNA by the elongation apparatus. In Flavobacterium johnsoniae (strain ATCC 17061 / DSM 2064 / JCM 8514 / BCRC 14874 / CCUG 350202 / NBRC 14942 / NCIMB 11054 / UW101) (Cytophaga johnsonae), this protein is Methionyl-tRNA formyltransferase.